Here is a 1288-residue protein sequence, read N- to C-terminus: Disease resistance protein RRS1 (1288 aa).

Residues 5–146 (EKDEEFVCIS…EIVRDVYETH (142 aa)) enclose the TIR domain. Residues 25-26 (SH) are important for interaction with RPS4. Positions 170-421 (IGIRCVGIWG…LLEGCGFFPH (252 aa)) constitute an NB-ARC domain. 179–186 (GMPGIGKT) contributes to the ATP binding site. LRR repeat units lie at residues 498 to 522 (SEEI…AFKN), 535 to 553 (NPEV…HSLP), 554 to 575 (NELR…NFDP), 577 to 598 (HLVE…TKNL), 621 to 646 (AENL…RLLR), 665 to 688 (PPNI…TVKP), 697 to 720 (LTEI…NSSC), 740 to 764 (LPNM…SIQG), 766 to 791 (PRFL…SLEI), 792 to 807 (LNAH…NMAN), 808 to 829 (LEFL…QGFP), and 830 to 852 (RNLK…PLSL). The short motif at 986 to 1003 (RKFHCWAPWQVVPKVRKD) is the Nuclear localization signal element. Positions 1202 to 1270 (IPAIDEGDLW…YLSEHNHPRP (69 aa)) form a DNA-binding region, WRKY. Residues 1267-1288 (HPRPTKRKALADSTRSTSSSIC) are disordered. A compositionally biased stretch (polar residues) spans 1279-1288 (STRSTSSSIC).

The protein belongs to the disease resistance TIR-NB-LRR family. In terms of assembly, interacts with PopP2, a R.solanacearum type III effector. Interacts with RPS4.

The protein localises to the nucleus. Its subcellular location is the cytoplasm. Functionally, transcription factor. Interacts specifically with the W box (5'-(T)TGAC[CT]-3'), a frequently occurring elicitor-responsive cis-acting element. Also acts as a disease resistance protein involved in resistance to fungal and bacterial pathogens, including R.solanacearum, P.syringae pv. tomato and C.higginsianum. Heterodimerization with RPS4 is required to form a functional complex to recognize AvrRps4 and PopP2. Contributes to temperature-conditioned RPS4 auto-immunity. This Arabidopsis thaliana (Mouse-ear cress) protein is Disease resistance protein RRS1.